Consider the following 146-residue polypeptide: 3-dehydroquinate dehydratase (146 aa).

Y22 (proton acceptor) is an active-site residue. Substrate contacts are provided by N73, H79, and D86. H101 acts as the Proton donor in catalysis. Residues 102–103 (IS) and R112 each bind substrate.

Belongs to the type-II 3-dehydroquinase family. Homododecamer.

The enzyme catalyses 3-dehydroquinate = 3-dehydroshikimate + H2O. It participates in metabolic intermediate biosynthesis; chorismate biosynthesis; chorismate from D-erythrose 4-phosphate and phosphoenolpyruvate: step 3/7. In terms of biological role, catalyzes a trans-dehydration via an enolate intermediate. The polypeptide is 3-dehydroquinate dehydratase (aroQ) (Corynebacterium pseudotuberculosis (strain C231)).